A 110-amino-acid chain; its full sequence is RNA silencing suppressor (110 aa).

The interval arginine 50–arginine 53 is basic. The segment at cysteine 60–cysteine 81 adopts a C4-type zinc-finger fold.

This sequence belongs to the carlaviruses nucleic acid-binding protein family.

Functionally, suppressor of viral-induced RNA silencing. The potential mechanism of action is based on sequestering siRNAs. This Helenium virus S (HelVS) protein is RNA silencing suppressor.